The sequence spans 241 residues: 1-(5-phosphoribosyl)-5-[(5-phosphoribosylamino)methylideneamino] imidazole-4-carboxamide isomerase (241 aa).

The Proton acceptor role is filled by aspartate 8. The Proton donor role is filled by aspartate 129.

This sequence belongs to the HisA/HisF family.

The protein resides in the cytoplasm. It catalyses the reaction 1-(5-phospho-beta-D-ribosyl)-5-[(5-phospho-beta-D-ribosylamino)methylideneamino]imidazole-4-carboxamide = 5-[(5-phospho-1-deoxy-D-ribulos-1-ylimino)methylamino]-1-(5-phospho-beta-D-ribosyl)imidazole-4-carboxamide. It functions in the pathway amino-acid biosynthesis; L-histidine biosynthesis; L-histidine from 5-phospho-alpha-D-ribose 1-diphosphate: step 4/9. In Rhodospirillum rubrum (strain ATCC 11170 / ATH 1.1.1 / DSM 467 / LMG 4362 / NCIMB 8255 / S1), this protein is 1-(5-phosphoribosyl)-5-[(5-phosphoribosylamino)methylideneamino] imidazole-4-carboxamide isomerase.